A 297-amino-acid chain; its full sequence is Aspartate carbamoyltransferase catalytic subunit (297 aa).

Carbamoyl phosphate is bound by residues Arg52 and Thr53. Residue Lys80 coordinates L-aspartate. Residues Arg102, His130, and Gln133 each contribute to the carbamoyl phosphate site. 2 residues coordinate L-aspartate: Arg167 and Arg217. 2 residues coordinate carbamoyl phosphate: Gly256 and Pro257.

It belongs to the aspartate/ornithine carbamoyltransferase superfamily. ATCase family. Heterododecamer (2C3:3R2) of six catalytic PyrB chains organized as two trimers (C3), and six regulatory PyrI chains organized as three dimers (R2).

The enzyme catalyses carbamoyl phosphate + L-aspartate = N-carbamoyl-L-aspartate + phosphate + H(+). It participates in pyrimidine metabolism; UMP biosynthesis via de novo pathway; (S)-dihydroorotate from bicarbonate: step 2/3. Its function is as follows. Catalyzes the condensation of carbamoyl phosphate and aspartate to form carbamoyl aspartate and inorganic phosphate, the committed step in the de novo pyrimidine nucleotide biosynthesis pathway. The sequence is that of Aspartate carbamoyltransferase catalytic subunit from Helicobacter hepaticus (strain ATCC 51449 / 3B1).